The primary structure comprises 348 residues: MNIKEALNRIVAQLDLTTEEMQAVMREIMTGQCTDAQIGAFLMGMRMKSETIDEIVGAASVMRELAAPVVIDAERLVDTCGTGGDGMNIFNVSTAAAFVVAAAGGKVAKHGNRAVSGKSGSADLLEAAGVYLGLKPEQVARCVESVGVGFMFAPSHHGAMKHAIGPRRELGLRTIFNMLGPMTNPAGARHQVIGVFSQALCRPMAEVLQRLGSEHVLVVHAQDGLDEISLAAPTFVAELKDGKVSEYRIQPEDFAIKSQSLIGLTVDNAEQSLELIRDALGRRKTENGQKAADMIVLNAGAALYAADHASSLREGVQLAHDALHTGLAREKLEELVSLTAVFKQENEG.

Residues G81, 84 to 85 (GD), 91 to 94 (NVST), 109 to 117 (KHGNRAVSG), and S121 each bind 5-phospho-alpha-D-ribose 1-diphosphate. G81 is a binding site for anthranilate. S93 serves as a coordination point for Mg(2+). N112 is an anthranilate binding site. Anthranilate is bound at residue R167. The Mg(2+) site is built by D226 and E227.

This sequence belongs to the anthranilate phosphoribosyltransferase family. As to quaternary structure, homodimer. Requires Mg(2+) as cofactor.

It catalyses the reaction N-(5-phospho-beta-D-ribosyl)anthranilate + diphosphate = 5-phospho-alpha-D-ribose 1-diphosphate + anthranilate. It functions in the pathway amino-acid biosynthesis; L-tryptophan biosynthesis; L-tryptophan from chorismate: step 2/5. In terms of biological role, catalyzes the transfer of the phosphoribosyl group of 5-phosphorylribose-1-pyrophosphate (PRPP) to anthranilate to yield N-(5'-phosphoribosyl)-anthranilate (PRA). This Ectopseudomonas mendocina (strain ymp) (Pseudomonas mendocina) protein is Anthranilate phosphoribosyltransferase.